We begin with the raw amino-acid sequence, 515 residues long: Sugar transport protein MST4 (515 aa).

At 1–17 (MAGGFSVSGSGVEFEAK) the chain is on the cytoplasmic side. The chain crosses the membrane as a helical span at residues 18 to 38 (ITPIVIISCIMAATGGLMFGY). At 39–78 (DVGISGGVTSMDDFLREFFPTVLKKKHEDKESNYCKYDNQ) the chain is on the extracellular side. Residues 79–99 (GLQLFTSSLYLAGLTATFFAS) traverse the membrane as a helical segment. The Cytoplasmic portion of the chain corresponds to 100-108 (YTTRRLGRR). Residues 109-129 (LTMLIAGVFFIVGVIFNGAAQ) form a helical membrane-spanning segment. Over 130-138 (NLAMLIVGR) the chain is Extracellular. A helical transmembrane segment spans residues 139 to 159 (ILLGCGVGFANQAVPLFLSEI). The Cytoplasmic portion of the chain corresponds to 160–165 (APTRIR). A helical membrane pass occupies residues 166 to 186 (GGLNILFQLNVTIGILFANLV). Residues 187–199 (NYGTAKIHPWGWR) lie on the Extracellular side of the membrane. A helical membrane pass occupies residues 200–220 (LSLSLAGIPAALLTLGALFVV). At 221-280 (DTPNSLIERGRLEEGKAVLRKIRGTDNVEPEFNEIVEASRVAQEVKHPFRNLLQRRNRPQ) the chain is on the cytoplasmic side. A helical membrane pass occupies residues 281 to 301 (LVIAVLLQIFQQFTGINAIMF). Topologically, residues 302–315 (YAPVLFNTLGFKTD) are extracellular. Residues 316–336 (ASLYSAVITGAVNVLSTLVSV) form a helical membrane-spanning segment. At 337–347 (YSVDRVGRRML) the chain is on the cytoplasmic side. Residues 348–368 (LLEAGVQMFLSQVAIAVVLGI) traverse the membrane as a helical segment. Residues 369-379 (KVTDRSDNLGH) lie on the Extracellular side of the membrane. Residues 380-400 (GWAIMVVVMVCTFVSSFAWSW) traverse the membrane as a helical segment. The Cytoplasmic segment spans residues 401–422 (GPLGWLIPSETFPLETRSAGQS). Residues 423–443 (VTVCVNLLFTFVIAQAFLSML) form a helical membrane-spanning segment. Topologically, residues 444-448 (CHLKY) are extracellular. A helical transmembrane segment spans residues 449–469 (AIFAFFSAWVVVMSLFVLFFL). The Cytoplasmic segment spans residues 470 to 515 (PETKNIPIEEMTERVWKQHWFWKRFMDDADKHHVVPNGGKSNGATV).

It belongs to the major facilitator superfamily. Sugar transporter (TC 2.A.1.1) family. In terms of tissue distribution, expressed in roots, shoots, leaf blades, leaf sheaths, anthers, ovaries and embryos.

The protein resides in the membrane. Mediates active uptake of hexoses by sugar:proton symport. Can transport glucose, fructose, mannose and galactose. Can transport xylose and ribose. This Oryza sativa subsp. japonica (Rice) protein is Sugar transport protein MST4.